The following is a 214-amino-acid chain: Probable transaldolase (214 aa).

The active-site Schiff-base intermediate with substrate is the lysine 83.

Belongs to the transaldolase family. Type 3B subfamily.

It is found in the cytoplasm. The catalysed reaction is D-sedoheptulose 7-phosphate + D-glyceraldehyde 3-phosphate = D-erythrose 4-phosphate + beta-D-fructose 6-phosphate. Its pathway is carbohydrate degradation; pentose phosphate pathway; D-glyceraldehyde 3-phosphate and beta-D-fructose 6-phosphate from D-ribose 5-phosphate and D-xylulose 5-phosphate (non-oxidative stage): step 2/3. Functionally, transaldolase is important for the balance of metabolites in the pentose-phosphate pathway. This is Probable transaldolase from Geobacter sp. (strain M21).